Here is a 178-residue protein sequence, read N- to C-terminus: MPKPKKGARFGGSASHQKAIFANLATALFEHGRITTTEAKAKAVRPYAEKLITKAKAGTLADRREVLKVIRNKDVVHSLFAEIGPSFEGREGGYTRITKTLPRKGDNAPMAIIELVREKTVTNEADRARRVAASKKAEEQAPAAEAEEQAPAAEAEAPAADAAAEAKADEAAEDKKDA.

The segment covering 126–139 (DRARRVAASKKAEE) has biased composition (basic and acidic residues). A disordered region spans residues 126 to 178 (DRARRVAASKKAEEQAPAAEAEEQAPAAEAEAPAADAAAEAKADEAAEDKKDA). Over residues 140 to 163 (QAPAAEAEEQAPAAEAEAPAADAA) the composition is skewed to low complexity. Residues 164-178 (AEAKADEAAEDKKDA) show a composition bias toward basic and acidic residues.

The protein belongs to the bacterial ribosomal protein bL17 family. As to quaternary structure, part of the 50S ribosomal subunit. Contacts protein L32.

The sequence is that of Large ribosomal subunit protein bL17 from Nocardia farcinica (strain IFM 10152).